The sequence spans 334 residues: RNA polymerase sigma factor RpoS (334 aa).

The disordered stretch occupies residues 21–50; it reads PGIMLDESSADEQPSPRATPKATTSFSSKQ. The sigma-70 factor domain-1 stretch occupies residues 61-94; it reads DATQLYLNEIGFSPLLTPEEEVHFARLAQKGDPA. Positions 99–169 are sigma-70 factor domain-2; that stretch reads MIESNLRLVV…ERAIMNQTRT (71 aa). Positions 123–126 match the Interaction with polymerase core subunit RpoC motif; the sequence is DLIE. Positions 179-254 are sigma-70 factor domain-3; it reads ELNVYLRAAR…DDRPTDPCEL (76 aa). Residues 267–320 form a sigma-70 factor domain-4 region; sequence WLTELTDKQREVVIRRFGLRGHESSTLEEVGQEIGLTRERVRQIQVEALKRLRE. A DNA-binding region (H-T-H motif) is located at residues 293-312; sequence LEEVGQEIGLTRERVRQIQV.

Belongs to the sigma-70 factor family. RpoS subfamily. In terms of assembly, interacts with the RNA polymerase core enzyme.

It localises to the cytoplasm. Sigma factors are initiation factors that promote the attachment of RNA polymerase to specific initiation sites and are then released. This sigma factor is the master transcriptional regulator of the stationary phase and the general stress response. The chain is RNA polymerase sigma factor RpoS from Pseudomonas aeruginosa (strain ATCC 15692 / DSM 22644 / CIP 104116 / JCM 14847 / LMG 12228 / 1C / PRS 101 / PAO1).